We begin with the raw amino-acid sequence, 554 residues long: Glucose-binding protein GlcS (554 aa).

Residues 1–17 (MKRKYPYSLAKGLTSTQ) lie on the Cytoplasmic side of the membrane. Residues 18-38 (IAVIVAVIVIVIIIGVVAGFV) traverse the membrane as a helical segment. Residues 39-525 (LTKGPSTTAV…YGLTNNTQKT (487 aa)) are Extracellular-facing. A helical membrane pass occupies residues 526-546 (SNSVMLFLLPFLALPLAIASI). The Cytoplasmic portion of the chain corresponds to 547-554 (DNKYYLLK).

This sequence belongs to the bacterial solute-binding protein 1 family. In terms of assembly, the complex is composed of two ATP-binding proteins (GlcV), two transmembrane proteins (GlcT and GlcU) and a solute-binding protein (GlcS).

The protein resides in the cell membrane. Its activity is regulated as follows. Binding of glucose is strongly inhibited by galactose and mannose. Functionally, part of the ABC transporter complex GlcSTUV involved in glucose uptake. Binds glucose. Can also bind galactose and mannose. The polypeptide is Glucose-binding protein GlcS (Saccharolobus solfataricus (strain ATCC 35092 / DSM 1617 / JCM 11322 / P2) (Sulfolobus solfataricus)).